Here is a 255-residue protein sequence, read N- to C-terminus: MARDQKDHYYRKAKEEGYRARSAYKLKQINDKFHIIRRGSRVVDLGAAPGGWLQVARELSGGIVVGVDLERIEPLEGIVTIQGDITKEETLEQIAAALGGQADVVISDAAPNLSGIWDVDHARSIDLSRAALRIAKRLLRPGGSFLVKVFQGDMFNDYLEEVKREFSSVHAYTPPASRKESAEIYVIGKKLLSAPVRSGEIYDVTVDSVGRTGDGIAMIQGFAVIVKNASPGERLRIKIGPVKQRFAFASILERL.

Positions 50, 52, 68, 84, and 108 each coordinate S-adenosyl-L-methionine. The Proton acceptor role is filled by Lys-148. Positions 195 to 253 constitute a TRAM domain; the sequence is PVRSGEIYDVTVDSVGRTGDGIAMIQGFAVIVKNASPGERLRIKIGPVKQRFAFASILE.

It belongs to the class I-like SAM-binding methyltransferase superfamily. RNA methyltransferase RlmE family.

It is found in the cytoplasm. The enzyme catalyses uridine(2552) in 23S rRNA + S-adenosyl-L-methionine = 2'-O-methyluridine(2552) in 23S rRNA + S-adenosyl-L-homocysteine + H(+). Functionally, specifically methylates the uridine in position 2552 of 23S rRNA at the 2'-O position of the ribose in the fully assembled 50S ribosomal subunit. This Methanothrix thermoacetophila (strain DSM 6194 / JCM 14653 / NBRC 101360 / PT) (Methanosaeta thermophila) protein is Ribosomal RNA large subunit methyltransferase E.